The following is a 182-amino-acid chain: Ribosome maturation factor RimM (182 aa).

Positions 102–182 (EEGDYYWKDL…TIEVDWDPGF (81 aa)) constitute a PRC barrel domain.

This sequence belongs to the RimM family. In terms of assembly, binds ribosomal protein uS19.

The protein resides in the cytoplasm. An accessory protein needed during the final step in the assembly of 30S ribosomal subunit, possibly for assembly of the head region. Essential for efficient processing of 16S rRNA. May be needed both before and after RbfA during the maturation of 16S rRNA. It has affinity for free ribosomal 30S subunits but not for 70S ribosomes. The sequence is that of Ribosome maturation factor RimM from Klebsiella pneumoniae (strain 342).